A 560-amino-acid chain; its full sequence is Formate--tetrahydrofolate ligase (560 aa).

Residue 70-77 (TPAGEGKT) participates in ATP binding.

It belongs to the formate--tetrahydrofolate ligase family.

The enzyme catalyses (6S)-5,6,7,8-tetrahydrofolate + formate + ATP = (6R)-10-formyltetrahydrofolate + ADP + phosphate. The protein operates within one-carbon metabolism; tetrahydrofolate interconversion. This chain is Formate--tetrahydrofolate ligase, found in Methanocorpusculum labreanum (strain ATCC 43576 / DSM 4855 / Z).